A 475-amino-acid chain; its full sequence is Transcription factor EB (475 aa).

The segment at 1-52 (MASRIGLRMQLMREQAQQEEQRERMQQQAVMHYMQQQQQQQQQLGGPPTPAI) is disordered. Residues 1 to 166 (MASRIGLRMQ…DDVIDNIMRL (166 aa)) are interaction with ACSS2. The segment covering 26–43 (QQQAVMHYMQQQQQQQQQ) has biased composition (low complexity). Ser108, Ser113, Ser121, and Ser137 each carry phosphoserine. The Nuclear export signal signature appears at 135–152 (GNSAPNSPMAMLHISSNP). Phosphoserine; by MTOR is present on Ser141. Positions 155 to 164 (EFDDVIDNIM) are strong transcription activation domain. Residue Thr182 is modified to Phosphothreonine. Residue Ser210 is modified to Phosphoserine; by MTOR. S-(2,3-dicarboxypropyl)cysteine is present on Cys211. The bHLH domain occupies 234–287 (QKKDNHNLIERRRRFNINDRIKELGMLIPKANDLDVRWNKGTILKASVDYIRRM). The Nuclear localization signal motif lies at 244–247 (RRRR). The tract at residues 297–318 (LENHSRRLEMTNKQLWLRIQEL) is leucine-zipper. Ser331 carries the post-translational modification Phosphoserine. The disordered stretch occupies residues 351-429 (SEDGPGEALM…HGSPFPNLSK (79 aa)). Residues 380–389 (LPSAAQPQSP) are compositionally biased toward low complexity. 5 positions are modified to phosphoserine: Ser422, Ser440, Ser465, Ser466, and Ser468. Over residues 445 to 468 (ASDPLFSTMSPEASKASSRRSSFS) the composition is skewed to low complexity. Residues 445-475 (ASDPLFSTMSPEASKASSRRSSFSMEEGDVL) are disordered.

This sequence belongs to the MiT/TFE family. In terms of assembly, homodimer and heterodimer; with TFE3 or MITF. Interacts (when phosphorylated by MTOR) with YWHAZ; promoting retention in the cytosol. Interacts with Irgm1; promoting association between TFEB and PPP3CB and dephosphorylation. Interacts with small GTPases Rag (RagA/RRAGA, RagB/RRAGB, RagC/RRAGC and/or RagD/RRAGD); promoting its recruitment to lysosomal membrane in the presence of nutrients. Interacts with ACSS2. Phosphorylation at Ser-210 by MTOR via non-canonical mTORC1 pathway regulates its subcellular location and activity. When nutrients are present, phosphorylation by MTOR promotes association with 14-3-3/YWHA adapters and retention in the cytosol. Inhibition of mTORC1, starvation and lysosomal disruption, promotes dephosphorylation by calcineurin PPP3CB and translocation to the nucleus. Dephosphorylated by calcineurin PPP3CB in response to lysosomal Ca(2+) release. Irgm1 promotes dephosphorylation by calcineurin PPP3CB, resulting in TFEB nuclear translocation and stimulation of lysosomal biogenesis. Exported from the nucleus in a mTORC1-dependent manner in response to nutrient availability. Post-translationally, alkylated via a non-enzymatic covalent modification. Itaconate, an anti-inflammatory metabolite generated in response to lipopolysaccharide, alkylates Cys-211, preventing association with 14-3-3/YWHA adapters, thereby promoting nuclear translocation and activity. In terms of processing, sumoylated; does not affect dimerization with MITF. In terms of tissue distribution, widely expressed.

The protein localises to the nucleus. It localises to the cytoplasm. The protein resides in the cytosol. Its subcellular location is the lysosome membrane. Transcription factor that acts as a master regulator of lysosomal biogenesis, autophagy, lysosomal exocytosis, lipid catabolism, energy metabolism and immune response. Specifically recognizes and binds E-box sequences (5'-CANNTG-3'); efficient DNA-binding requires dimerization with itself or with another MiT/TFE family member such as TFE3 or MITF. Involved in the cellular response to amino acid availability by acting downstream of MTOR: in the presence of nutrients, TFEB phosphorylation by MTOR promotes its cytosolic retention and subsequent inactivation. Upon starvation or lysosomal stress, inhibition of MTOR induces TFEB dephosphorylation, resulting in nuclear localization and transcription factor activity. Specifically recognizes and binds the CLEAR-box sequence (5'-GTCACGTGAC-3') present in the regulatory region of many lysosomal genes, leading to activate their expression, thereby playing a central role in expression of lysosomal genes. Regulates lysosomal positioning in response to nutrient deprivation by promoting the expression of PIP4P1. Acts as a positive regulator of autophagy by promoting expression of genes involved in autophagy. In association with TFE3, activates the expression of CD40L in T-cells, thereby playing a role in T-cell-dependent antibody responses in activated CD4(+) T-cells and thymus-dependent humoral immunity. Specifically recognizes the gamma-E3 box, a subset of E-boxes, present in the heavy-chain immunoglobulin enhancer. Plays a role in the signal transduction processes required for normal vascularization of the placenta. Involved in the immune response to infection by the bacteria S.aureus, S.typhimurium or S.enterica. Infection promotes itaconate production, leading to alkylation, resulting in nuclear localization and transcription factor activity. Itaconate-mediated alkylation activates TFEB-dependent lysosomal biogenesis, facilitating the bacteria clearance during the antibacterial innate immune response. In association with ACSS2, promotes the expression of genes involved in lysosome biogenesis and both autophagy upon glucose deprivation. The protein is Transcription factor EB of Mus musculus (Mouse).